The primary structure comprises 113 residues: Large ribosomal subunit protein uL22 (113 aa).

This sequence belongs to the universal ribosomal protein uL22 family. In terms of assembly, part of the 50S ribosomal subunit.

In terms of biological role, this protein binds specifically to 23S rRNA; its binding is stimulated by other ribosomal proteins, e.g. L4, L17, and L20. It is important during the early stages of 50S assembly. It makes multiple contacts with different domains of the 23S rRNA in the assembled 50S subunit and ribosome. Functionally, the globular domain of the protein is located near the polypeptide exit tunnel on the outside of the subunit, while an extended beta-hairpin is found that lines the wall of the exit tunnel in the center of the 70S ribosome. This is Large ribosomal subunit protein uL22 from Pelotomaculum thermopropionicum (strain DSM 13744 / JCM 10971 / SI).